We begin with the raw amino-acid sequence, 347 residues long: S-adenosylmethionine:tRNA ribosyltransferase-isomerase (347 aa).

This sequence belongs to the QueA family. As to quaternary structure, monomer.

It localises to the cytoplasm. The enzyme catalyses 7-aminomethyl-7-carbaguanosine(34) in tRNA + S-adenosyl-L-methionine = epoxyqueuosine(34) in tRNA + adenine + L-methionine + 2 H(+). It participates in tRNA modification; tRNA-queuosine biosynthesis. Transfers and isomerizes the ribose moiety from AdoMet to the 7-aminomethyl group of 7-deazaguanine (preQ1-tRNA) to give epoxyqueuosine (oQ-tRNA). The sequence is that of S-adenosylmethionine:tRNA ribosyltransferase-isomerase from Bordetella parapertussis (strain 12822 / ATCC BAA-587 / NCTC 13253).